Reading from the N-terminus, the 567-residue chain is Dihydroxy-acid dehydratase (567 aa).

Cys-52 lines the [2Fe-2S] cluster pocket. Asp-84 contributes to the Mg(2+) binding site. Cys-125 lines the [2Fe-2S] cluster pocket. Asp-126 and Lys-127 together coordinate Mg(2+). The residue at position 127 (Lys-127) is an N6-carboxylysine. Cys-197 contacts [2Fe-2S] cluster. Glu-448 is a binding site for Mg(2+). Residue Ser-474 is the Proton acceptor of the active site.

It belongs to the IlvD/Edd family. In terms of assembly, homodimer. [2Fe-2S] cluster is required as a cofactor. Requires Mg(2+) as cofactor.

The enzyme catalyses (2R)-2,3-dihydroxy-3-methylbutanoate = 3-methyl-2-oxobutanoate + H2O. It carries out the reaction (2R,3R)-2,3-dihydroxy-3-methylpentanoate = (S)-3-methyl-2-oxopentanoate + H2O. Its pathway is amino-acid biosynthesis; L-isoleucine biosynthesis; L-isoleucine from 2-oxobutanoate: step 3/4. The protein operates within amino-acid biosynthesis; L-valine biosynthesis; L-valine from pyruvate: step 3/4. In terms of biological role, functions in the biosynthesis of branched-chain amino acids. Catalyzes the dehydration of (2R,3R)-2,3-dihydroxy-3-methylpentanoate (2,3-dihydroxy-3-methylvalerate) into 2-oxo-3-methylpentanoate (2-oxo-3-methylvalerate) and of (2R)-2,3-dihydroxy-3-methylbutanoate (2,3-dihydroxyisovalerate) into 2-oxo-3-methylbutanoate (2-oxoisovalerate), the penultimate precursor to L-isoleucine and L-valine, respectively. The sequence is that of Dihydroxy-acid dehydratase from Streptococcus pneumoniae serotype 2 (strain D39 / NCTC 7466).